A 1134-amino-acid chain; its full sequence is Tetrathionate reductase subunit A (1134 aa).

A signal peptide (tat-type signal) is located at residues 1–31 (MQLSRRDFIKGLVAVGSASVFLAGYSETVDR). The 88-residue stretch at 46–133 (GRIVHSACLG…DGIHYLYDPY (88 aa)) folds into the 4Fe-4S Mo/W bis-MGD-type domain. 4 residues coordinate [4Fe-4S] cluster: Cys-53, Cys-56, Cys-60, and Cys-119.

The protein belongs to the prokaryotic molybdopterin-containing oxidoreductase family. Probably composed of three subunits: TtrA, TtrB and TtrC. Precursor interacts with TtrD. Requires [4Fe-4S] cluster as cofactor. The cofactor is Mo-bis(molybdopterin guanine dinucleotide). Exported by the Tat system. The position of the signal peptide cleavage has not been experimentally proven.

The protein resides in the cell membrane. Functionally, part of a membrane-bound tetrathionate reductase that catalyzes the reduction of tetrathionate to thiosulfate. TtrA is the catalytic subunit. This is Tetrathionate reductase subunit A (ttrA) from Archaeoglobus fulgidus (strain ATCC 49558 / DSM 4304 / JCM 9628 / NBRC 100126 / VC-16).